We begin with the raw amino-acid sequence, 180 residues long: tRNA (cytidine(56)-2'-O)-methyltransferase (180 aa).

S-adenosyl-L-methionine contacts are provided by residues Leu82, 112–116, and 130–137; these read GAEKV and VGNQPHSE.

Belongs to the aTrm56 family. As to quaternary structure, homodimer.

It is found in the cytoplasm. The catalysed reaction is cytidine(56) in tRNA + S-adenosyl-L-methionine = 2'-O-methylcytidine(56) in tRNA + S-adenosyl-L-homocysteine + H(+). Specifically catalyzes the AdoMet-dependent 2'-O-ribose methylation of cytidine at position 56 in tRNAs. This is tRNA (cytidine(56)-2'-O)-methyltransferase from Methanococcus vannielii (strain ATCC 35089 / DSM 1224 / JCM 13029 / OCM 148 / SB).